The chain runs to 432 residues: C-type cytochrome OmcS (432 aa).

Residues 1–25 form the signal peptide; it reads MKKGMKVSLSVAAAALLMSAPAAFA.

It depends on heme as a cofactor.

Its subcellular location is the cell outer membrane. It is found in the cell surface. Plays an important role in extracellular electron transfer. Can transfer electrons to insoluble Fe(3+) oxides as well as other extracellular electron acceptors, including Mn(4+) oxide and humic substances. Essential for direct interspecies electron transfer (DIET) in cocultures with G.metallireducens. This is C-type cytochrome OmcS from Geobacter sulfurreducens (strain ATCC 51573 / DSM 12127 / PCA).